The following is a 193-amino-acid chain: Cell wall galactomannoprotein (193 aa).

An N-terminal signal peptide occupies residues 1 to 17; it reads MFFRILALLPLVFLVTA. Asn38 and Asn173 each carry an N-linked (GlcNAc...) asparagine glycan.

Belongs to the cell wall mannoprotein 1 family. Post-translationally, galactomannoprotein, glycosylated.

It localises to the secreted. The protein localises to the cell wall. In terms of biological role, constitutive protein of the cell wall. This chain is Cell wall galactomannoprotein, found in Armillaria ostoyae (Armillaria root rot fungus).